The following is a 218-amino-acid chain: Peptide methionine sulfoxide reductase MsrA (218 aa).

The active site involves C57.

It belongs to the MsrA Met sulfoxide reductase family.

The catalysed reaction is L-methionyl-[protein] + [thioredoxin]-disulfide + H2O = L-methionyl-(S)-S-oxide-[protein] + [thioredoxin]-dithiol. The enzyme catalyses [thioredoxin]-disulfide + L-methionine + H2O = L-methionine (S)-S-oxide + [thioredoxin]-dithiol. Functionally, has an important function as a repair enzyme for proteins that have been inactivated by oxidation. Catalyzes the reversible oxidation-reduction of methionine sulfoxide in proteins to methionine. This Brucella melitensis biotype 2 (strain ATCC 23457) protein is Peptide methionine sulfoxide reductase MsrA.